Consider the following 1488-residue polypeptide: Chromosome partition protein MukB (1488 aa).

G34–S41 is a binding site for ATP. Coiled-coil stretches lie at residues L326–Q418, L444–H472, and R509–P602. The tract at residues P666–R783 is flexible hinge. Coiled coils occupy residues E835 to E923, E977 to G1116, and V1209 to V1265. Positions A1049 to R1074 are disordered. Residues S1051 to H1065 are compositionally biased toward basic and acidic residues.

This sequence belongs to the SMC family. MukB subfamily. As to quaternary structure, homodimerization via its hinge domain. Binds to DNA via its C-terminal region. Interacts, and probably forms a ternary complex, with MukE and MukF via its C-terminal region. The complex formation is stimulated by calcium or magnesium. Interacts with tubulin-related protein FtsZ.

Its subcellular location is the cytoplasm. It localises to the nucleoid. Its function is as follows. Plays a central role in chromosome condensation, segregation and cell cycle progression. Functions as a homodimer, which is essential for chromosome partition. Involved in negative DNA supercoiling in vivo, and by this means organize and compact chromosomes. May achieve or facilitate chromosome segregation by condensation DNA from both sides of a centrally located replisome during cell division. The chain is Chromosome partition protein MukB from Salmonella heidelberg (strain SL476).